We begin with the raw amino-acid sequence, 408 residues long: NADH-quinone oxidoreductase subunit D (408 aa).

Belongs to the complex I 49 kDa subunit family. As to quaternary structure, NDH-1 is composed of 14 different subunits. Subunits NuoB, C, D, E, F, and G constitute the peripheral sector of the complex.

The protein resides in the cell inner membrane. It catalyses the reaction a quinone + NADH + 5 H(+)(in) = a quinol + NAD(+) + 4 H(+)(out). Functionally, NDH-1 shuttles electrons from NADH, via FMN and iron-sulfur (Fe-S) centers, to quinones in the respiratory chain. The immediate electron acceptor for the enzyme in this species is believed to be ubiquinone. Couples the redox reaction to proton translocation (for every two electrons transferred, four hydrogen ions are translocated across the cytoplasmic membrane), and thus conserves the redox energy in a proton gradient. This is NADH-quinone oxidoreductase subunit D from Campylobacter jejuni subsp. jejuni serotype O:2 (strain ATCC 700819 / NCTC 11168).